Here is a 406-residue protein sequence, read N- to C-terminus: Phosphopentomutase (406 aa).

Mn(2+)-binding residues include Asp10, Asp305, His310, Asp346, His347, and His358.

Belongs to the phosphopentomutase family. Mn(2+) is required as a cofactor.

It is found in the cytoplasm. The enzyme catalyses 2-deoxy-alpha-D-ribose 1-phosphate = 2-deoxy-D-ribose 5-phosphate. The catalysed reaction is alpha-D-ribose 1-phosphate = D-ribose 5-phosphate. It functions in the pathway carbohydrate degradation; 2-deoxy-D-ribose 1-phosphate degradation; D-glyceraldehyde 3-phosphate and acetaldehyde from 2-deoxy-alpha-D-ribose 1-phosphate: step 1/2. Its function is as follows. Isomerase that catalyzes the conversion of deoxy-ribose 1-phosphate (dRib-1-P) and ribose 1-phosphate (Rib-1-P) to deoxy-ribose 5-phosphate (dRib-5-P) and ribose 5-phosphate (Rib-5-P), respectively. In Aliivibrio salmonicida (strain LFI1238) (Vibrio salmonicida (strain LFI1238)), this protein is Phosphopentomutase.